A 25-amino-acid chain; its full sequence is ATP-dependent 6-phosphofructokinase 2 (25 aa).

ATP is bound at residue Gly-11.

The protein belongs to the phosphofructokinase type A (PFKA) family. ATP-dependent PFK group I subfamily. Prokaryotic clade 'B1' sub-subfamily. Homotetramer. The cofactor is Mg(2+).

Its subcellular location is the cytoplasm. It catalyses the reaction beta-D-fructose 6-phosphate + ATP = beta-D-fructose 1,6-bisphosphate + ADP + H(+). It functions in the pathway carbohydrate degradation; glycolysis; D-glyceraldehyde 3-phosphate and glycerone phosphate from D-glucose: step 3/4. With respect to regulation, in contrast with PFK1 this enzyme is not affected by phosphoenolpyruvate. Catalyzes the phosphorylation of D-fructose 6-phosphate to fructose 1,6-bisphosphate by ATP, the first committing step of glycolysis. The polypeptide is ATP-dependent 6-phosphofructokinase 2 (pfkA2) (Thermus thermophilus (strain ATCC 27634 / DSM 579 / HB8)).